Reading from the N-terminus, the 224-residue chain is MFPKINTIDPYISLRLFEVKPKYVGYSSIDARNQSFAIHGIKNYEKFSNAGFFYTSPTEITCYCCGMKFCNWLYEKHPLQVHGFWSRNCGFMRATLGIIGLKKMIDSYNDYYNNEVFVKHKNRVYTHKRLEDMGFSKPFMRFILANAFIPPYRKYIHKIILNERYFTFKFAAHLLSFHKVNLDNQTTYCMTCGIEPIKKDENFCNACKTLNYKHYKTLNFSVKL.

A BIR repeat occupies 29–92; the sequence is IDARNQSFAI…GFWSRNCGFM (64 aa). 4 residues coordinate Zn(2+): Cys62, Cys65, His82, and Cys89.

The protein belongs to the asfivirus IAP family. Interacts with subunit p17 of host CASP3.

The protein resides in the host cytoplasm. The protein localises to the virion. In terms of biological role, prevent apoptosis of host cell by inhibiting caspase-3/CASP3 activation to promote the viral replication. Also induces the activation of host NF-kappaB. This is Inhibitor of apoptosis protein (p27) from African swine fever virus (isolate Pig/Haiti/H811/1981) (ASFV).